A 180-amino-acid polypeptide reads, in one-letter code: Large ribosomal subunit protein uL6 (180 aa).

This sequence belongs to the universal ribosomal protein uL6 family. In terms of assembly, part of the 50S ribosomal subunit.

This protein binds to the 23S rRNA, and is important in its secondary structure. It is located near the subunit interface in the base of the L7/L12 stalk, and near the tRNA binding site of the peptidyltransferase center. This chain is Large ribosomal subunit protein uL6, found in Thermus aquaticus.